The primary structure comprises 391 residues: Putative alpha-ketoglutarate-dependent sulfonate dioxygenase (391 aa).

2 residues coordinate Fe cation: H204 and D206. The 2-oxoglutarate site is built by T231 and W338. A Fe cation-binding site is contributed by H353. 2 residues coordinate 2-oxoglutarate: R364 and R368.

The protein belongs to the TfdA dioxygenase family. Fe(2+) serves as cofactor.

It participates in organosulfur degradation; alkanesulfonate degradation. In terms of biological role, acts as an alpha-ketoglutarate-dependent dioxygenase active on sulfonates. The sequence is that of Putative alpha-ketoglutarate-dependent sulfonate dioxygenase from Schizosaccharomyces pombe (strain 972 / ATCC 24843) (Fission yeast).